The sequence spans 320 residues: ATP-dependent 6-phosphofructokinase isozyme 1 (320 aa).

Glycine 12 lines the ATP pocket. ADP contacts are provided by residues 22–26 (RGVVR) and 55–60 (RYSVSD). ATP contacts are provided by residues 73-74 (RF) and 103-106 (GDGS). Residue aspartate 104 coordinates Mg(2+). 126 to 128 (TID) is a substrate binding site. Aspartate 128 functions as the Proton acceptor in the catalytic mechanism. Arginine 155 provides a ligand contact to ADP. Substrate contacts are provided by residues arginine 163 and 170-172 (MGR). ADP is bound by residues 186–188 (GCE), lysine 212, and 214–216 (KKH). Residues glutamate 223, arginine 244, and 250–253 (HIQR) contribute to the substrate site.

Belongs to the phosphofructokinase type A (PFKA) family. ATP-dependent PFK group I subfamily. Prokaryotic clade 'B1' sub-subfamily. Homotetramer. Mg(2+) is required as a cofactor.

Its subcellular location is the cytoplasm. It catalyses the reaction beta-D-fructose 6-phosphate + ATP = beta-D-fructose 1,6-bisphosphate + ADP + H(+). The protein operates within carbohydrate degradation; glycolysis; D-glyceraldehyde 3-phosphate and glycerone phosphate from D-glucose: step 3/4. Allosterically activated by ADP and other diphosphonucleosides, and allosterically inhibited by phosphoenolpyruvate. Its function is as follows. Catalyzes the phosphorylation of D-fructose 6-phosphate to fructose 1,6-bisphosphate by ATP, the first committing step of glycolysis. This Shigella boydii serotype 18 (strain CDC 3083-94 / BS512) protein is ATP-dependent 6-phosphofructokinase isozyme 1.